A 132-amino-acid chain; its full sequence is ATP synthase epsilon chain (132 aa).

The protein belongs to the ATPase epsilon chain family. As to quaternary structure, F-type ATPases have 2 components, CF(1) - the catalytic core - and CF(0) - the membrane proton channel. CF(1) has five subunits: alpha(3), beta(3), gamma(1), delta(1), epsilon(1). CF(0) has three main subunits: a, b and c.

It localises to the cell inner membrane. Its function is as follows. Produces ATP from ADP in the presence of a proton gradient across the membrane. The polypeptide is ATP synthase epsilon chain (atpC) (Aquifex aeolicus (strain VF5)).